Reading from the N-terminus, the 337-residue chain is ATP-dependent (S)-NAD(P)H-hydrate dehydratase (337 aa).

Phosphoserine is present on Ser6. Residues 11–335 enclose the YjeF C-terminal domain; sequence IKLAQKRCIP…DRVGEVFAKL (325 aa). Residues Gly121 and 182-188 contribute to the (6S)-NADPHX site; that span reads NVVEFKR. ATP contacts are provided by residues 218–222 and 240–249; these read KGQSD and GSNKRVGGQG. Residues 224-246 form a disordered region; it reads IFSPDSEKDMLTNSEEGSNKRVG. Asp250 contributes to the (6S)-NADPHX binding site.

Belongs to the NnrD/CARKD family. Mg(2+) is required as a cofactor.

The protein resides in the cytoplasm. It carries out the reaction (6S)-NADHX + ATP = ADP + phosphate + NADH + H(+). The enzyme catalyses (6S)-NADPHX + ATP = ADP + phosphate + NADPH + H(+). Functionally, catalyzes the dehydration of the S-form of NAD(P)HX at the expense of ATP, which is converted to ADP. Together with NAD(P)HX epimerase, which catalyzes the epimerization of the S- and R-forms, the enzyme allows the repair of both epimers of NAD(P)HX, a damaged form of NAD(P)H that is a result of enzymatic or heat-dependent hydration. The protein is ATP-dependent (S)-NAD(P)H-hydrate dehydratase of Saccharomyces cerevisiae (strain ATCC 204508 / S288c) (Baker's yeast).